A 332-amino-acid polypeptide reads, in one-letter code: Fructose-1,6-bisphosphatase class 1 (332 aa).

The Mg(2+) site is built by Glu-89, Asp-110, Leu-112, and Asp-113. Substrate-binding positions include 113–116 (DGSS), Asn-206, Tyr-239, 257–259 (YLY), and Lys-269. Glu-275 is a binding site for Mg(2+).

This sequence belongs to the FBPase class 1 family. Homotetramer. Mg(2+) is required as a cofactor.

The protein localises to the cytoplasm. It catalyses the reaction beta-D-fructose 1,6-bisphosphate + H2O = beta-D-fructose 6-phosphate + phosphate. It participates in carbohydrate biosynthesis; gluconeogenesis. The chain is Fructose-1,6-bisphosphatase class 1 from Enterobacter sp. (strain 638).